We begin with the raw amino-acid sequence, 288 residues long: 4-diphosphocytidyl-2-C-methyl-D-erythritol kinase (288 aa).

Lysine 11 is an active-site residue. 100-110 (PIAAGLGSGSS) contacts ATP. Residue aspartate 140 is part of the active site.

Belongs to the GHMP kinase family. IspE subfamily.

The catalysed reaction is 4-CDP-2-C-methyl-D-erythritol + ATP = 4-CDP-2-C-methyl-D-erythritol 2-phosphate + ADP + H(+). Its pathway is isoprenoid biosynthesis; isopentenyl diphosphate biosynthesis via DXP pathway; isopentenyl diphosphate from 1-deoxy-D-xylulose 5-phosphate: step 3/6. In terms of biological role, catalyzes the phosphorylation of the position 2 hydroxy group of 4-diphosphocytidyl-2C-methyl-D-erythritol. The sequence is that of 4-diphosphocytidyl-2-C-methyl-D-erythritol kinase from Wolbachia pipientis wMel.